The primary structure comprises 316 residues: Transaldolase A (316 aa).

Lys131 functions as the Schiff-base intermediate with substrate in the catalytic mechanism.

It belongs to the transaldolase family. Type 1 subfamily. In terms of assembly, homodimer.

It is found in the cytoplasm. It catalyses the reaction D-sedoheptulose 7-phosphate + D-glyceraldehyde 3-phosphate = D-erythrose 4-phosphate + beta-D-fructose 6-phosphate. Its pathway is carbohydrate degradation; pentose phosphate pathway; D-glyceraldehyde 3-phosphate and beta-D-fructose 6-phosphate from D-ribose 5-phosphate and D-xylulose 5-phosphate (non-oxidative stage): step 2/3. Functionally, transaldolase is important for the balance of metabolites in the pentose-phosphate pathway. This Escherichia coli O157:H7 protein is Transaldolase A (talA).